Reading from the N-terminus, the 921-residue chain is Inter-alpha-trypsin inhibitor heavy chain H4 (921 aa).

Residues 1–27 form the signal peptide; sequence MKTLSPTGYGLLLVLPLLLAVLQSTTA. Residues 28–146 enclose the VIT domain; that stretch reads HKNDINIYSL…KVTFELVYEE (119 aa). N-linked (GlcNAc...) asparagine glycosylation is found at Asn80, Asn205, and Asn242. The VWFA domain occupies 270 to 428; that stretch reads PKNVIFVIDT…YAFLEKMALE (159 aa). Residues Asn513 and Asn577 are each glycosylated (N-linked (GlcNAc...) asparagine). The interval 591 to 646 is disordered; sequence KPEGQEQSQVAEKPVENGNRQGNTHSGHSSFQFHSVGDRTSRLTGGSSVDPVFSHR. The segment covering 608 to 623 has biased composition (polar residues); sequence GNRQGNTHSGHSSFQF. A glycan (O-linked (GalNAc...) threonine) is linked at Thr712. Cys738 and Cys916 are oxidised to a cystine.

This sequence belongs to the ITIH family. As to quaternary structure, interacts (via C-terminus) with DNAJC1 (via SANT 2 domain). Post-translationally, appears to be both N- and O-glycosylated. In terms of processing, cleaved by plasma kallikrein to yield 55- and 25-kDa fragments. In terms of tissue distribution, liver specific.

The protein localises to the secreted. Functionally, type II acute-phase protein (APP) involved in inflammatory responses to trauma. May also play a role in liver development or regeneration. The sequence is that of Inter-alpha-trypsin inhibitor heavy chain H4 (ITIH4) from Sus scrofa (Pig).